The sequence spans 985 residues: Cation channel sperm-associated auxiliary subunit epsilon (985 aa).

A signal peptide spans methionine 1–valine 35. At valine 36 to serine 937 the chain is on the extracellular side. Cystine bridges form between cysteine 87–cysteine 101, cysteine 130–cysteine 235, cysteine 275–cysteine 365, and cysteine 439–cysteine 442. Residues asparagine 91, asparagine 143, and asparagine 292 are each glycosylated (N-linked (GlcNAc...) asparagine). Asparagine 502, asparagine 517, and asparagine 565 each carry an N-linked (GlcNAc...) asparagine glycan. 4 disulfide bridges follow: cysteine 617–cysteine 724, cysteine 737–cysteine 919, cysteine 753–cysteine 786, and cysteine 838–cysteine 869. N-linked (GlcNAc...) asparagine glycosylation occurs at asparagine 749. Residue asparagine 830 is glycosylated (N-linked (GlcNAc...) asparagine). Asparagine 888, asparagine 915, and asparagine 920 each carry an N-linked (GlcNAc...) asparagine glycan. The chain crosses the membrane as a helical span at residues valine 938–leucine 958. Topologically, residues serine 959–asparagine 985 are cytoplasmic.

This sequence belongs to the CATSPERD family. In terms of assembly, component of the CatSper complex or CatSpermasome composed of the core pore-forming members CATSPER1, CATSPER2, CATSPER3 and CATSPER4 as well as auxiliary members CATSPERB, CATSPERG2, CATSPERD, CATSPERE, CATSPERZ, C2CD6/CATSPERT, SLCO6C1, TMEM249, TMEM262 and EFCAB9. HSPA1 may be an additional auxiliary complex member. The core complex members CATSPER1, CATSPER2, CATSPER3 and CATSPER4 form a heterotetrameric channel. The auxiliary CATSPERB, CATSPERG2, CATSPERD and CATSPERE subunits form a pavilion-like structure over the pore which stabilizes the complex through interactions with CATSPER4, CATSPER3, CATSPER1 and CATSPER2 respectively. SLCO6C1 interacts with CATSPERE and TMEM262/CATSPERH interacts with CATSPERB, further stabilizing the complex. C2CD6/CATSPERT interacts at least with CATSPERD and is required for targeting the CatSper complex in the flagellar membrane. As to expression, testis-specific.

The protein localises to the cell projection. Its subcellular location is the cilium. It is found in the flagellum membrane. Functionally, auxiliary component of the CatSper complex, a complex involved in sperm cell hyperactivation. Sperm cell hyperactivation is needed for sperm motility which is essential late in the preparation of sperm for fertilization. This Mus musculus (Mouse) protein is Cation channel sperm-associated auxiliary subunit epsilon.